A 631-amino-acid chain; its full sequence is MRRPKKYEAGEATQYISRRAAIRKLQLSLNDFRRLCILKGVYPREPKHRRRAQKGSSEIKILYHTKDIRFLLHESIVWTLRDYKIFAKKTSRDRAIKDFRNLKRRLALFPEIKLDHIVKERYPTFIDALKDLDDCLTLLFLFSTFPSLHLIPREQSNLCRRLTIEFLHYVIASKSLRKVFISIKGYYFQAEIKGQKVTWIMPHYYPFKPQSRQEVDFKVMSIFVEFYTILQGFTNFRLFHGLNLAYPPQFPSSLLQDNEDTFKDEASFVSDRIAALNFELLRTDKVQEDEEEPDIDMELLEQDGDSKRIIKMKQEAQEVSRLRTLFKGLKFFINREVPREPLVILIRSFGGKVSWDASVFPGATFAENDETITHQIVDRPSLSTQYISRDYIQPQWLFDCVNQRQLLPTNDYFLGETLPPHLSPFVDSKRDSYIPPEEKALHDPSLIETHEQSEEESEEDEAEKEEEEADQELLDAQLQLAYQQETAEYKKYGGPDGVNEDEEDLSEEDDEEDDDEEDVDKEDVDEQTKRKQQEKEKMSVQSGKVHKVNKRQVHKAEVDEHRLQARMVKPRHRNLFRKLIREKQTKEKEEWLLRKKRRNIDADNKEAKKAAKREARKQAAEAAARAAKLVK.

The BRCT domain occupies 321 to 414 (RLRTLFKGLK…QLLPTNDYFL (94 aa)). Residues 428–442 (SKRDSYIPPEEKALH) show a composition bias toward basic and acidic residues. Disordered regions lie at residues 428–471 (SKRD…EADQ), 489–561 (YKKY…VDEH), and 602–631 (ADNKEAKKAAKREARKQAAEAAARAAKLVK). A phosphoserine mark is found at serine 453 and serine 457. Composition is skewed to acidic residues over residues 453–471 (SEEESEEDEAEKEEEEADQ) and 498–525 (VNEDEEDLSEEDDEEDDDEEDVDKEDVD). Positions 526–538 (EQTKRKQQEKEKM) are enriched in basic and acidic residues. Basic residues predominate over residues 544-553 (KVHKVNKRQV). Residues 591-631 (WLLRKKRRNIDADNKEAKKAAKREARKQAAEAAARAAKLVK) adopt a coiled-coil conformation. Residues 602-619 (ADNKEAKKAAKREARKQA) are compositionally biased toward basic and acidic residues. Over residues 620–631 (AEAAARAAKLVK) the composition is skewed to low complexity.

This sequence belongs to the pescadillo family.

It localises to the nucleus. It is found in the nucleolus. The protein localises to the nucleoplasm. Required for maturation of ribosomal RNAs and formation of the large ribosomal subunit. This Drosophila pseudoobscura pseudoobscura (Fruit fly) protein is Pescadillo homolog.